The following is a 729-amino-acid chain: Elongation factor 2 (729 aa).

Residues 19-262 (EQIRNIAIAA…MVCEHFPNPV (244 aa)) form the tr-type G domain. Residues 28–35 (AHVDHGKT), 94–98 (DTPGH), and 148–151 (NKVD) each bind GTP. Histidine 597 carries the diphthamide modification.

This sequence belongs to the TRAFAC class translation factor GTPase superfamily. Classic translation factor GTPase family. EF-G/EF-2 subfamily.

Its subcellular location is the cytoplasm. Functionally, catalyzes the GTP-dependent ribosomal translocation step during translation elongation. During this step, the ribosome changes from the pre-translocational (PRE) to the post-translocational (POST) state as the newly formed A-site-bound peptidyl-tRNA and P-site-bound deacylated tRNA move to the P and E sites, respectively. Catalyzes the coordinated movement of the two tRNA molecules, the mRNA and conformational changes in the ribosome. This chain is Elongation factor 2, found in Natronomonas pharaonis (strain ATCC 35678 / DSM 2160 / CIP 103997 / JCM 8858 / NBRC 14720 / NCIMB 2260 / Gabara) (Halobacterium pharaonis).